We begin with the raw amino-acid sequence, 183 residues long: Translation initiation factor IF-3 (183 aa).

This sequence belongs to the IF-3 family. Monomer.

It is found in the cytoplasm. In terms of biological role, IF-3 binds to the 30S ribosomal subunit and shifts the equilibrium between 70S ribosomes and their 50S and 30S subunits in favor of the free subunits, thus enhancing the availability of 30S subunits on which protein synthesis initiation begins. This Pseudomonas entomophila (strain L48) protein is Translation initiation factor IF-3.